The chain runs to 269 residues: Calretinin (269 aa).

EF-hand domains are found at residues 14 to 49, 61 to 96, 105 to 140, 149 to 184, 193 to 228, and 230 to 265; these read LSASQFLDVWRHFDADGNGYIEGKELENFFQELESA, SLGDKMKEFMHKYDKNADGKIEMAELAQILPTEENF, GSSSEFMEAWRRYDTDRSGYIEANELKGFLSDLLKK, KLQEYTQTILRMFDMNGDGKLGLSEMSRLLPVQENF, LSSEEFNAIFAFYDKDGSGFIDEHELDALLKDLYEK, and KKEMSIQQLTNYRRSIMNLSDGGKLYRKELEVVLCS. Ca(2+) is bound by residues D27, D29, N31, Y33, E38, D74, N76, D78, K80, E85, D118, D120, S122, Y124, E129, D162, N164, D166, K168, E173, D206, D208, S210, and E217.

Belongs to the calbindin family.

The protein localises to the synapse. Its subcellular location is the cell projection. The protein resides in the dendrite. In terms of biological role, calcium-binding protein involved in calcium homeostasis and signal transduction. It plays a critical role in buffering intracellular calcium levels and modulating calcium-dependent signaling pathways. Predominantly expressed in specific neuronal populations, influences synaptic plasticity and neuronal excitability, contributing to learning and memory. During embryonic development, it facilitates neuronal differentiation and maturation. The chain is Calretinin (CALB2) from Gallus gallus (Chicken).